Reading from the N-terminus, the 860-residue chain is Ras GTPase-activating-like protein gapA (860 aa).

The span at 1-20 shows a compositional bias: acidic residues; that stretch reads MEGLEIEDEDVILLDEDDDS. The disordered stretch occupies residues 1–48; that stretch reads MEGLEIEDEDVILLDEDDDSSSSSTVNNSSSNIKNNGNTNNNIGNDDS. Residues 21–46 show a composition bias toward low complexity; the sequence is SSSSTVNNSSSNIKNNGNTNNNIGND. The stretch at 146–185 forms a coiled coil; it reads AEIQELKRNMVAEIRRNHLLERDVNKLDKRIALLIKHRSN. The region spanning 269–515 is the Ras-GAP domain; sequence FLILSLFRLA…SIVRQYLEDL (247 aa). A coiled-coil region spans residues 663-732; that stretch reads NNPQLSSNAE…TIALRDLRKH (70 aa).

In terms of assembly, heterotetramer. Quaternary complex with activated rac1A, ctxA and ctxB in the absence of rgaA.

In terms of biological role, part of signaling pathway that is required for completion of cytokinesis. gapA and rgaA control cortexillin localization to the cleavage furrow and hence may be involved in cleavage of the midbody in the final stage of cytokinesis by regulating the actin cytoskeleton. Forms a complex by linking activated rac1A to ctxA in the absence of rgaA. Assembly of this complex is necessary for the recruitment of cortexillin to the midzone of the dividing cell. This chain is Ras GTPase-activating-like protein gapA (gapA), found in Dictyostelium discoideum (Social amoeba).